Reading from the N-terminus, the 359-residue chain is Olfactory receptor 5T2 (359 aa).

Topologically, residues 1–64 (MSYSIYKSTV…GFTDNLELQT (64 aa)) are extracellular. Asn-44 carries N-linked (GlcNAc...) asparagine glycosylation. Residues 65–85 (IFFFLFLAIYLFTLMGNLGLI) form a helical membrane-spanning segment. Topologically, residues 86–93 (LVVIRDSQ) are cytoplasmic. A helical membrane pass occupies residues 94 to 114 (LHKPMYYFLSMLSSVDACYSS). At 115 to 138 (VITPNMLVDFTTKNKVISFLGCVA) the chain is on the extracellular side. A helical membrane pass occupies residues 139-159 (QVFLACSFGTTECFLLAAMAY). Over 160–178 (DRYVAIYNPLLYSVSMSPR) the chain is Cytoplasmic. The chain crosses the membrane as a helical span at residues 179–199 (VYMPLINASYVAGILHATIHT). The Extracellular segment spans residues 200-235 (VATFSLSFCGANEIRRVFCDIPPLLAISYSDTHTNQ). Residues 236–256 (LLLFYFVGSIELVTILIVLIS) form a helical membrane-spanning segment. At 257–276 (YGLILLAILKMYSAEGRRKV) the chain is on the cytoplasmic side. The chain crosses the membrane as a helical span at residues 277 to 297 (FSTCGAHLTGVSIYYGTILFM). The Extracellular segment spans residues 298–310 (YVRPSSSYASDHD). Residues 311-331 (MIVSIFYTIVIPLLNPVIYSL) traverse the membrane as a helical segment. Residues 332-359 (RNKDVKDSMKKMFGKNQVINKVYFHTKK) are Cytoplasmic-facing.

This sequence belongs to the G-protein coupled receptor 1 family.

The protein resides in the cell membrane. Functionally, odorant receptor. In Homo sapiens (Human), this protein is Olfactory receptor 5T2 (OR5T2).